The following is a 197-amino-acid chain: MSQKRLVLATKNQGKVREFRSLLAGAGFEIVGLDPDAPEVSETGDTFEENALIKARAASALTGLPALAEDSGIVVDALGGEPGVHSARWVPGSDEDRVRALLARMAEVPAERRTARYVSVIAVVLPSGREELFRGELEGRLAEAPRGTGGFGYDPIFVVADGRTVAEMALEEKNGISHRSRALARCLERLPALLEEG.

10 to 15 (TKNQGK) serves as a coordination point for substrate. Aspartate 70 (proton acceptor) is an active-site residue. Aspartate 70 contacts Mg(2+). Residues serine 71, 151–154 (FGYD), lysine 173, and 178–179 (HR) each bind substrate.

The protein belongs to the HAM1 NTPase family. As to quaternary structure, homodimer. Mg(2+) is required as a cofactor.

It catalyses the reaction XTP + H2O = XMP + diphosphate + H(+). The catalysed reaction is dITP + H2O = dIMP + diphosphate + H(+). The enzyme catalyses ITP + H2O = IMP + diphosphate + H(+). Pyrophosphatase that catalyzes the hydrolysis of nucleoside triphosphates to their monophosphate derivatives, with a high preference for the non-canonical purine nucleotides XTP (xanthosine triphosphate), dITP (deoxyinosine triphosphate) and ITP. Seems to function as a house-cleaning enzyme that removes non-canonical purine nucleotides from the nucleotide pool, thus preventing their incorporation into DNA/RNA and avoiding chromosomal lesions. This is dITP/XTP pyrophosphatase from Symbiobacterium thermophilum (strain DSM 24528 / JCM 14929 / IAM 14863 / T).